The following is a 279-amino-acid chain: Energy-coupling factor transporter ATP-binding protein EcfA1 (279 aa).

An ABC transporter domain is found at 6-240 (VEFRNVSFRY…KDALREIGLD (235 aa)). 40–47 (GHNGSGKS) contacts ATP.

It belongs to the ABC transporter superfamily. Energy-coupling factor EcfA family. Forms a stable energy-coupling factor (ECF) transporter complex composed of 2 membrane-embedded substrate-binding proteins (S component), 2 ATP-binding proteins (A component) and 2 transmembrane proteins (T component).

The protein localises to the cell membrane. Its function is as follows. ATP-binding (A) component of a common energy-coupling factor (ECF) ABC-transporter complex. Unlike classic ABC transporters this ECF transporter provides the energy necessary to transport a number of different substrates. This is Energy-coupling factor transporter ATP-binding protein EcfA1 from Oceanobacillus iheyensis (strain DSM 14371 / CIP 107618 / JCM 11309 / KCTC 3954 / HTE831).